We begin with the raw amino-acid sequence, 407 residues long: Magnesium-protoporphyrin IX monomethyl ester [oxidative] cyclase 1, chloroplastic (407 aa).

The span at 1 to 10 shows a compositional bias: polar residues; sequence MQTTLKQQRA. A disordered region spans residues 1–28; the sequence is MQTTLKQQRASGRVSARQPFRSAAVARP.

Belongs to the AcsF family. The cofactor is Fe cation.

It localises to the plastid. The protein resides in the chloroplast thylakoid membrane. The catalysed reaction is Mg-protoporphyrin IX 13-monomethyl ester + 3 NADPH + 3 O2 + 2 H(+) = 3,8-divinyl protochlorophyllide a + 3 NADP(+) + 5 H2O. It functions in the pathway porphyrin-containing compound metabolism; chlorophyll biosynthesis. Catalyzes the formation of the isocyclic ring in chlorophyll biosynthesis under oxygen- and copper-deficient conditions. Mediates the cyclase reaction, which results in the formation of divinylprotochlorophyllide (Pchlide) characteristic of all chlorophylls from magnesium-protoporphyrin IX 13-monomethyl ester (MgPMME). This is Magnesium-protoporphyrin IX monomethyl ester [oxidative] cyclase 1, chloroplastic (CRD1) from Chlamydomonas reinhardtii (Chlamydomonas smithii).